A 701-amino-acid polypeptide reads, in one-letter code: Elongation factor G (701 aa).

One can recognise a tr-type G domain in the interval 10–290 (AKVRNIGIMA…AVVDYLPSPL (281 aa)). GTP contacts are provided by residues 19-26 (AHIDAGKT), 83-87 (DTPGH), and 137-140 (NKMD).

The protein belongs to the TRAFAC class translation factor GTPase superfamily. Classic translation factor GTPase family. EF-G/EF-2 subfamily.

It is found in the cytoplasm. Functionally, catalyzes the GTP-dependent ribosomal translocation step during translation elongation. During this step, the ribosome changes from the pre-translocational (PRE) to the post-translocational (POST) state as the newly formed A-site-bound peptidyl-tRNA and P-site-bound deacylated tRNA move to the P and E sites, respectively. Catalyzes the coordinated movement of the two tRNA molecules, the mRNA and conformational changes in the ribosome. This chain is Elongation factor G, found in Tropheryma whipplei (strain Twist) (Whipple's bacillus).